Here is a 210-residue protein sequence, read N- to C-terminus: Nta operon transcriptional regulator (210 aa).

The 55-residue stretch at 1 to 55 (MAVSYHFRPGERINEVELAAQLKVSRTPLREALNRLTTEGFLTTTANKGFFARVL) folds into the HTH gntR-type domain. A DNA-binding region (H-T-H motif) is located at residues 15-34 (EVELAAQLKVSRTPLREALN).

Probable regulator for the expression of the NTA monooxygenase subunits. This is Nta operon transcriptional regulator (ntaR) from Aminobacter aminovorans (Chelatobacter heintzii).